Here is a 616-residue protein sequence, read N- to C-terminus: UDP-sugar pyrophosphorylase (616 aa).

The protein belongs to the USP family. It depends on Mg(2+) as a cofactor. Mn(2+) is required as a cofactor.

It catalyses the reaction a monosaccharide 1-phosphate + UTP + H(+) = a UDP-monosaccharide + diphosphate. In terms of biological role, may function as the terminal enzyme of the myo-inositol oxidation (MIO) pathway. May also play a role in the salvage pathway for synthesis of nucleotide sugars. This Oryza sativa subsp. japonica (Rice) protein is UDP-sugar pyrophosphorylase (USP).